We begin with the raw amino-acid sequence, 184 residues long: Shikimate kinase (184 aa).

18–23 (GAGKTT) is a binding site for ATP. Residue Thr-22 participates in Mg(2+) binding. Positions 40, 64, and 86 each coordinate substrate. Arg-124 is an ATP binding site. Arg-143 is a binding site for substrate. Position 160 (Gln-160) interacts with ATP.

Belongs to the shikimate kinase family. As to quaternary structure, monomer. It depends on Mg(2+) as a cofactor.

The protein localises to the cytoplasm. The catalysed reaction is shikimate + ATP = 3-phosphoshikimate + ADP + H(+). It participates in metabolic intermediate biosynthesis; chorismate biosynthesis; chorismate from D-erythrose 4-phosphate and phosphoenolpyruvate: step 5/7. Functionally, catalyzes the specific phosphorylation of the 3-hydroxyl group of shikimic acid using ATP as a cosubstrate. The chain is Shikimate kinase from Chromobacterium violaceum (strain ATCC 12472 / DSM 30191 / JCM 1249 / CCUG 213 / NBRC 12614 / NCIMB 9131 / NCTC 9757 / MK).